The following is a 55-amino-acid chain: Lantibiotic nisin-U (55 aa).

A propeptide spanning residues 1-24 is cleaved from the precursor; the sequence is MNNEDFNLDLIKISKENNSGASPR. Threonine 26 carries the post-translational modification 2,3-didehydrobutyrine. Residues 27 to 31 constitute a cross-link (lanthionine (Ser-Cys)); the sequence is SKSLC. 2,3-didehydroalanine (Ser) is present on serine 29. 4 cross-links (beta-methyllanthionine (Thr-Cys)) span residues 32–35, 37–43, 47–50, and 49–52; these read TPGC, TGILMTC, TATC, and TCGC. Threonine 42 is subject to 2,3-didehydrobutyrine.

Post-translationally, maturation of lantibiotics involves the enzymatic conversion of Thr, and Ser into dehydrated AA and the formation of thioether bonds with cysteine. This is followed by membrane translocation and cleavage of the modified precursor.

It localises to the secreted. In terms of biological role, lanthionine-containing peptide antibiotic (lantibiotic) active on Gram-positive bacteria. The bactericidal activity of lantibiotics is based on depolarization of energized bacterial cytoplasmic membranes, initiated by the formation of aqueous transmembrane pores. The polypeptide is Lantibiotic nisin-U (nsuA) (Streptococcus uberis).